We begin with the raw amino-acid sequence, 272 residues long: 3-methyl-2-oxobutanoate hydroxymethyltransferase (272 aa).

Mg(2+)-binding residues include Asp-51 and Asp-90. Residues 51–52 (DS), Asp-90, and Lys-119 each bind 3-methyl-2-oxobutanoate. A Mg(2+)-binding site is contributed by Glu-121. The active-site Proton acceptor is the Glu-188.

This sequence belongs to the PanB family. Homodecamer; pentamer of dimers. Requires Mg(2+) as cofactor.

It is found in the cytoplasm. The enzyme catalyses 3-methyl-2-oxobutanoate + (6R)-5,10-methylene-5,6,7,8-tetrahydrofolate + H2O = 2-dehydropantoate + (6S)-5,6,7,8-tetrahydrofolate. The protein operates within cofactor biosynthesis; (R)-pantothenate biosynthesis; (R)-pantoate from 3-methyl-2-oxobutanoate: step 1/2. Functionally, catalyzes the reversible reaction in which hydroxymethyl group from 5,10-methylenetetrahydrofolate is transferred onto alpha-ketoisovalerate to form ketopantoate. The polypeptide is 3-methyl-2-oxobutanoate hydroxymethyltransferase (Dechloromonas aromatica (strain RCB)).